The sequence spans 103 residues: Co-chaperonin GroES (103 aa).

It belongs to the GroES chaperonin family. In terms of assembly, heptamer of 7 subunits arranged in a ring. Interacts with the chaperonin GroEL.

It is found in the cytoplasm. In terms of biological role, together with the chaperonin GroEL, plays an essential role in assisting protein folding. The GroEL-GroES system forms a nano-cage that allows encapsulation of the non-native substrate proteins and provides a physical environment optimized to promote and accelerate protein folding. GroES binds to the apical surface of the GroEL ring, thereby capping the opening of the GroEL channel. This chain is Co-chaperonin GroES, found in Rippkaea orientalis (strain PCC 8801 / RF-1) (Cyanothece sp. (strain PCC 8801)).